A 231-amino-acid chain; its full sequence is 5'-methylthioadenosine/S-adenosylhomocysteine nucleosidase (231 aa).

The Proton acceptor role is filled by Glu12. Residues Gly78, Met153, and 174–175 contribute to the substrate site; that span reads ME. Residue Asp198 is the Proton donor of the active site.

It belongs to the PNP/UDP phosphorylase family. MtnN subfamily.

The catalysed reaction is S-adenosyl-L-homocysteine + H2O = S-(5-deoxy-D-ribos-5-yl)-L-homocysteine + adenine. The enzyme catalyses S-methyl-5'-thioadenosine + H2O = 5-(methylsulfanyl)-D-ribose + adenine. It carries out the reaction 5'-deoxyadenosine + H2O = 5-deoxy-D-ribose + adenine. Its pathway is amino-acid biosynthesis; L-methionine biosynthesis via salvage pathway; S-methyl-5-thio-alpha-D-ribose 1-phosphate from S-methyl-5'-thioadenosine (hydrolase route): step 1/2. Functionally, catalyzes the irreversible cleavage of the glycosidic bond in both 5'-methylthioadenosine (MTA) and S-adenosylhomocysteine (SAH/AdoHcy) to adenine and the corresponding thioribose, 5'-methylthioribose and S-ribosylhomocysteine, respectively. Also cleaves 5'-deoxyadenosine, a toxic by-product of radical S-adenosylmethionine (SAM) enzymes, into 5-deoxyribose and adenine. The protein is 5'-methylthioadenosine/S-adenosylhomocysteine nucleosidase of Bacillus cytotoxicus (strain DSM 22905 / CIP 110041 / 391-98 / NVH 391-98).